The primary structure comprises 339 residues: Fructose-1,6-bisphosphatase class 1 (339 aa).

4 residues coordinate Mg(2+): E92, D114, L116, and D117. Substrate contacts are provided by residues 117–120 (DGSS), N213, and K279. E285 serves as a coordination point for Mg(2+).

The protein belongs to the FBPase class 1 family. As to quaternary structure, homotetramer. It depends on Mg(2+) as a cofactor.

It is found in the cytoplasm. It catalyses the reaction beta-D-fructose 1,6-bisphosphate + H2O = beta-D-fructose 6-phosphate + phosphate. Its pathway is carbohydrate biosynthesis; gluconeogenesis. The polypeptide is Fructose-1,6-bisphosphatase class 1 (Acidovorax sp. (strain JS42)).